The sequence spans 129 residues: Small ribosomal subunit protein uS11 (129 aa).

Belongs to the universal ribosomal protein uS11 family. Part of the 30S ribosomal subunit. Interacts with proteins S7 and S18. Binds to IF-3.

Functionally, located on the platform of the 30S subunit, it bridges several disparate RNA helices of the 16S rRNA. Forms part of the Shine-Dalgarno cleft in the 70S ribosome. This chain is Small ribosomal subunit protein uS11, found in Psychrobacter arcticus (strain DSM 17307 / VKM B-2377 / 273-4).